The sequence spans 942 residues: Homeobox transcription factor phx1 (942 aa).

4 stretches are compositionally biased toward polar residues: residues 1–19 (MRSY…NINY), 61–73 (HLQG…TNPN), 99–116 (ADNN…TNPS), and 122–135 (IVKS…SKQN). 5 disordered regions span residues 1–54 (MRSY…MQLP), 61–80 (HLQG…PEFD), 87–172 (KQEK…KKQR), 604–651 (WANQ…STST), and 892–922 (SSSG…DVYS). Residues 142–151 (SVEKAKENVA) are compositionally biased toward basic and acidic residues. Residues 153-164 (ESGTPESGGSTS) show a composition bias toward low complexity. Positions 164 to 224 (SAPKSKKQRL…QNRRAKSKLI (61 aa)) form a DNA-binding region, homeobox. Polar residues-rich tracts occupy residues 604-614 (WANQLPRQPDS) and 630-641 (SHDTSSEYGNKS).

The protein localises to the nucleus. Trnascription factor that regulates the expression of the homocitrate synthase (HCS) lys4. The sequence is that of Homeobox transcription factor phx1 (phx1) from Schizosaccharomyces pombe (strain 972 / ATCC 24843) (Fission yeast).